We begin with the raw amino-acid sequence, 519 residues long: Nif-specific regulatory protein (519 aa).

The Sigma-54 factor interaction domain occupies 177–405 (IVGESPALKR…LDNCVQRTAT (229 aa)). Residues 205 to 212 (GESGTGKE) and 268 to 277 (ANGGTLLLDE) contribute to the ATP site. Residues 406–476 (LASSNTITSS…ATIEAAGLTE (71 aa)) form an inter-domain linker region. Positions 419 and 424 each coordinate a divalent metal cation. The segment at 477–519 (RDRLIKAMERAGWVQAKAARILGKTPRQVGYALRRHRIDVKKE) is C-terminal DNA-binding domain. A DNA-binding region (H-T-H motif) is located at residues 491 to 510 (QAKAARILGKTPRQVGYALR).

As to quaternary structure, interacts with sigma-54.

Required for activation of most nif operons, which are directly involved in nitrogen fixation. The protein is Nif-specific regulatory protein (nifA) of Rhizobium leguminosarum.